Here is a 37-residue protein sequence, read N- to C-terminus: MKVRSSVKKRCEKCRIIKRNGRIMVICENPRHKQKQG.

Belongs to the bacterial ribosomal protein bL36 family.

The polypeptide is Large ribosomal subunit protein bL36 (Persephonella marina (strain DSM 14350 / EX-H1)).